A 127-amino-acid chain; its full sequence is Aspartate 1-decarboxylase (127 aa).

The Schiff-base intermediate with substrate; via pyruvic acid role is filled by S25. S25 carries the pyruvic acid (Ser) modification. T57 contributes to the substrate binding site. The active-site Proton donor is the Y58. Residue 73–75 participates in substrate binding; that stretch reads GAA.

This sequence belongs to the PanD family. Heterooctamer of four alpha and four beta subunits. The cofactor is pyruvate. Post-translationally, is synthesized initially as an inactive proenzyme, which is activated by self-cleavage at a specific serine bond to produce a beta-subunit with a hydroxyl group at its C-terminus and an alpha-subunit with a pyruvoyl group at its N-terminus.

Its subcellular location is the cytoplasm. It carries out the reaction L-aspartate + H(+) = beta-alanine + CO2. It functions in the pathway cofactor biosynthesis; (R)-pantothenate biosynthesis; beta-alanine from L-aspartate: step 1/1. Catalyzes the pyruvoyl-dependent decarboxylation of aspartate to produce beta-alanine. The protein is Aspartate 1-decarboxylase of Bacillus cereus (strain ATCC 10987 / NRS 248).